Here is a 116-residue protein sequence, read N- to C-terminus: Large ribosomal subunit protein uL18 (116 aa).

Belongs to the universal ribosomal protein uL18 family. As to quaternary structure, part of the 50S ribosomal subunit; part of the 5S rRNA/L5/L18/L25 subcomplex. Contacts the 5S and 23S rRNAs.

This is one of the proteins that bind and probably mediate the attachment of the 5S RNA into the large ribosomal subunit, where it forms part of the central protuberance. This chain is Large ribosomal subunit protein uL18, found in Marinomonas sp. (strain MWYL1).